The sequence spans 454 residues: Tyrosine aminotransferase (454 aa).

An N-acetylmethionine modification is found at methionine 1. Lysine 280 carries the post-translational modification N6-(pyridoxal phosphate)lysine. At serine 448 the chain carries Phosphoserine.

It belongs to the class-I pyridoxal-phosphate-dependent aminotransferase family. As to quaternary structure, homodimer. Requires pyridoxal 5'-phosphate as cofactor.

It catalyses the reaction L-tyrosine + 2-oxoglutarate = 3-(4-hydroxyphenyl)pyruvate + L-glutamate. The protein operates within amino-acid degradation; L-phenylalanine degradation; acetoacetate and fumarate from L-phenylalanine: step 2/6. Its function is as follows. Transaminase involved in tyrosine breakdown. Converts tyrosine to p-hydroxyphenylpyruvate. Can catalyze the reverse reaction, using glutamic acid, with 2-oxoglutarate as cosubstrate (in vitro). Has much lower affinity and transaminase activity for phenylalanine. The chain is Tyrosine aminotransferase (Tat) from Mus musculus (Mouse).